The chain runs to 150 residues: Large ribosomal subunit protein bL9 (150 aa).

This sequence belongs to the bacterial ribosomal protein bL9 family.

In terms of biological role, binds to the 23S rRNA. In Pseudarthrobacter chlorophenolicus (strain ATCC 700700 / DSM 12829 / CIP 107037 / JCM 12360 / KCTC 9906 / NCIMB 13794 / A6) (Arthrobacter chlorophenolicus), this protein is Large ribosomal subunit protein bL9.